The sequence spans 189 residues: Elongation factor P (189 aa).

Lys-34 is subject to N6-(3,6-diaminohexanoyl)-5-hydroxylysine.

Belongs to the elongation factor P family. Post-translationally, may be beta-lysylated on the epsilon-amino group of Lys-34 by the combined action of EpmA and EpmB, and then hydroxylated on the C5 position of the same residue by EpmC (if this protein is present). Lysylation is critical for the stimulatory effect of EF-P on peptide-bond formation. The lysylation moiety may extend toward the peptidyltransferase center and stabilize the terminal 3-CCA end of the tRNA. Hydroxylation of the C5 position on Lys-34 may allow additional potential stabilizing hydrogen-bond interactions with the P-tRNA.

It is found in the cytoplasm. The protein operates within protein biosynthesis; polypeptide chain elongation. In terms of biological role, involved in peptide bond synthesis. Alleviates ribosome stalling that occurs when 3 or more consecutive Pro residues or the sequence PPG is present in a protein, possibly by augmenting the peptidyl transferase activity of the ribosome. Modification of Lys-34 is required for alleviation. The polypeptide is Elongation factor P (Saccharophagus degradans (strain 2-40 / ATCC 43961 / DSM 17024)).